Consider the following 315-residue polypeptide: Transcription repressor OFP7 (315 aa).

Residues 113–183 (YETPRRKIYN…ELPRVTRRPR (71 aa)) are disordered. The segment covering 130 to 145 (RRRLKKKEKSNSRRRG) has biased composition (basic residues). Polar residues predominate over residues 160-174 (LPSSTNLSPEYSSSE). The 60-residue stretch at 230–289 (VVKKSEDPYEDFKGSMMEMIVEKKMFEVAELEQLLSCFLSLNAKRHHRAIVRAFSEIWVA) folds into the OVATE domain.

Expressed in roots, shoots, stems, flower buds and siliques.

It is found in the nucleus. In terms of biological role, transcriptional repressor that regulates multiple aspects of plant growth and development through the regulation of BEL1-LIKE (BLH) and KNOX TALE (KNAT) homeodomain transcription factors. The sequence is that of Transcription repressor OFP7 (OFP7) from Arabidopsis thaliana (Mouse-ear cress).